The chain runs to 406 residues: Probable tRNA pseudouridine synthase D (406 aa).

D77 serves as the catalytic Nucleophile. Residues G150 to K371 form the TRUD domain.

This sequence belongs to the pseudouridine synthase TruD family.

The enzyme catalyses uridine(13) in tRNA = pseudouridine(13) in tRNA. In terms of biological role, could be responsible for synthesis of pseudouridine from uracil-13 in transfer RNAs. This is Probable tRNA pseudouridine synthase D from Pyrococcus abyssi (strain GE5 / Orsay).